A 654-amino-acid chain; its full sequence is MTQLAIGEATPHGATYDGHGVNFTLFSAHAERVELCVFDSRGNERRYDLPGRRGDVWHGYLAGARPGLRYGYRVHGPWQPAQGHRFNPAKLLLDPYARQVEGELKDHPLLHGGHDEPDYRDNAAVAPKSVVISDHYDWEDDAAPRTPWGKTVIYEAHVKGLTYLHPELPQEIRGTYKALGHPVMVAYFKQLGITALELLPVAQFASEPRLQRMGLTNYWGYNPMAMFALHPAWASSPETALDEFRDAVKALHRAGIEVILDIVLNHSAELDLDGPTFSLRGIDNRSYYWIRDDGDYHNWTGCGNTLNLSHPGVVEYACECLRYWMETCHVDGFRFDLASVMGRTPTFRQDAPLFAAIKACPVLSTVKLIAEPWDIGEGGYQVGNFPPPFAEWNDHFRDAARRFWLPRNLTTGEFACRFAASSDVFKRNGRAPGASVNLLTAHDGFTLRDCVCFNQKHNEANGEENRDGTNSNYSDNHGKEGLGGPLDLMERRRDSIHALLATLLLSQGTPMLLAGDEHGHSQHGNNNAYCQDNALTWLDWQQANRGLTTFTAALIRLRQQIPALTGNSWWEEGDGNVRWLNKNAQPLSADEWQNGPKLMQILLSDRFLIAINATLEVTDIVLPEGEWRAVPPFAGEDNPVITAVWQGLCVFQRG.

Aspartate 336 functions as the Nucleophile in the catalytic mechanism. Glutamate 371 serves as the catalytic Proton donor. The tract at residues 459–484 (EANGEENRDGTNSNYSDNHGKEGLGG) is disordered.

It belongs to the glycosyl hydrolase 13 family.

The enzyme catalyses Hydrolysis of (1-&gt;6)-alpha-D-glucosidic linkages to branches with degrees of polymerization of three or four glucose residues in limit dextrin.. It functions in the pathway glycan degradation; glycogen degradation. Its function is as follows. Removes maltotriose and maltotetraose chains that are attached by 1,6-alpha-linkage to the limit dextrin main chain, generating a debranched limit dextrin. The sequence is that of Glycogen debranching enzyme from Salmonella typhi.